A 512-amino-acid polypeptide reads, in one-letter code: Cytochrome P450 monooxygenase gliC (512 aa).

A signal peptide spans 1–19; it reads MAFTLTILVPCMVLALVAA. N-linked (GlcNAc...) asparagine glycosylation is found at N118, N421, and N434. Residue C452 participates in heme binding.

Belongs to the cytochrome P450 family. Requires heme as cofactor.

Its pathway is mycotoxin biosynthesis. Its function is as follows. Cytochrome P450 monooxygenase; part of the gene cluster that mediates the biosynthesis of gliotoxin, a member of the epipolythiodioxopiperazine (ETP) class of toxins characterized by a disulfide bridged cyclic dipeptide. The first step in gliotoxin biosynthesis is the condensation of serine and phenylalanine to form the cyclo-L-phenylalanyl-L-serine diketopiperazine (DKP) by the NRPS gliP. GliP is also able to produce the DKP cyclo-L-tryptophanyl-L-serine, suggesting that the substrate specificity of the first adenylation (A) domain in gliP is sufficiently relaxed to accommodate both L-Phe and L-Trp. The cytochrome P450 monooxygenase gliC has been shown to catalyze the subsequent hydroxylation of the alpha-carbon of L-Phe in cyclo-L-phenylalanyl-L-serine whereas the second cytochrome P450 enzyme, gliF, is presumably involved in the modification of the DKP side chain. The glutathione S-transferase (GST) gliG then forms a bis-glutathionylated biosynthetic intermediate which is responsible for the sulfurization of gliotoxin. This bis-glutathionylated intermediate is subsequently processed by the gamma-glutamyl cyclotransferase gliK to remove both gamma-glutamyl moieties. Subsequent processing via gliI yields a biosynthetic intermediate, which is N-methylated via the N-methyltransferase gliN, before the gliotoxin oxidoreductase gliT-mediated disulfide bridge closure. GliN-mediated amide methylation confers stability to ETP, damping the spontaneous formation of tri- and tetrasulfides. Intracellular dithiol gliotoxin oxidized by gliT is subsequently effluxed by gliA. Gliotoxin contributes to pathogenesis during invasive aspergillosis. In macrophages and neutrophils, gliotoxin showed inhibition of various different cell functions including cytokine production, antigen presentation, phagocytosis, and production of reactive oxygen species. The protein is Cytochrome P450 monooxygenase gliC of Aspergillus fumigatus (strain ATCC MYA-4609 / CBS 101355 / FGSC A1100 / Af293) (Neosartorya fumigata).